We begin with the raw amino-acid sequence, 86 residues long: Large ribosomal subunit protein bL27 (86 aa).

The tract at residues 1–23 (MAHKKGTGSTRNGRDSNSKRLGV) is disordered.

The protein belongs to the bacterial ribosomal protein bL27 family.

The chain is Large ribosomal subunit protein bL27 from Prochlorococcus marinus (strain MIT 9515).